A 563-amino-acid polypeptide reads, in one-letter code: Testis-expressed basic protein 1 (563 aa).

A helical membrane pass occupies residues 3–23; it reads VLEITLAVILTLLGLAILAIL. The tract at residues 56 to 81 is disordered; it reads GSRHAYSTQSDTSYDNRERSKRDYTP. Residues 69-79 show a composition bias toward basic and acidic residues; that stretch reads YDNRERSKRDY. The helical transmembrane segment at 99–119 threads the bilayer; the sequence is ELILLLMCFILALSRSSIGSI. Residues 311 to 563 form a disordered region; sequence SEMSIPQGQG…GRKYNKKVEE (253 aa). The segment covering 367 to 383 has biased composition (basic and acidic residues); the sequence is QVEKSEMGVPRRQESQV. Over residues 384 to 395 the composition is skewed to low complexity; that stretch reads KKSQSGVSKGQE. Composition is skewed to basic and acidic residues over residues 412–447 and 485–544; these read QVEKSELKVPKGQEGQVEKTEADVPKEQEVQEKKSE and EAQE…EKSK.

The protein localises to the membrane. The polypeptide is Testis-expressed basic protein 1 (Homo sapiens (Human)).